The sequence spans 96 residues: Co-chaperonin GroES (96 aa).

The protein belongs to the GroES chaperonin family. Heptamer of 7 subunits arranged in a ring. Interacts with the chaperonin GroEL.

It is found in the cytoplasm. Its function is as follows. Together with the chaperonin GroEL, plays an essential role in assisting protein folding. The GroEL-GroES system forms a nano-cage that allows encapsulation of the non-native substrate proteins and provides a physical environment optimized to promote and accelerate protein folding. GroES binds to the apical surface of the GroEL ring, thereby capping the opening of the GroEL channel. The sequence is that of Co-chaperonin GroES from Nitrosomonas eutropha (strain DSM 101675 / C91 / Nm57).